Here is a 982-residue protein sequence, read N- to C-terminus: Pentatricopeptide repeat-containing protein At5g62370 (982 aa).

24 PPR repeats span residues 94-129, 130-164, 165-199, 200-234, 236-270, 271-305, 306-340, 341-376, 377-411, 412-446, 476-510, 511-545, 546-580, 581-615, 616-650, 651-685, 686-720, 721-755, 759-789, 793-827, 828-858, 860-894, 895-929, and 930-964; these read DSSC…GIVP, DSSV…GYAP, SRNS…GSGL, WLWC…TRMP, PVNL…GYYV, DKVM…SFEL, DPCI…GVQS, NVFT…DISR, NVHC…GIVP, DHIT…GCGI, AAVG…GCTP, LPFS…DFVP, DVDT…GLRP, TVAI…GIQP, DEIA…FLRP, SSFT…GLSP, NVVL…DIKH, DHIA…KLLQ, RTKP…VKKS, NLYL…GIVP, NLVT…TNCE, DQVM…GINP, NKDS…DIWP, and RSIN…GRSL.

This sequence belongs to the PPR family. P subfamily.

The polypeptide is Pentatricopeptide repeat-containing protein At5g62370 (Arabidopsis thaliana (Mouse-ear cress)).